The primary structure comprises 470 residues: Xaa-Pro aminopeptidase 2 (470 aa).

Mn(2+)-binding residues include Asp287, Asp299, His382, Glu413, and Glu437.

This sequence belongs to the peptidase M24B family. In terms of assembly, homodimer. The cofactor is Mn(2+).

It catalyses the reaction Release of any N-terminal amino acid, including proline, that is linked to proline, even from a dipeptide or tripeptide.. The protein is Xaa-Pro aminopeptidase 2 (pepP2) of Streptomyces coelicolor (strain ATCC BAA-471 / A3(2) / M145).